The sequence spans 849 residues: Putative endoplasmic reticulum mannosidase MNL2 (849 aa).

Over 1-12 (MSIARLVYSLFR) the chain is Cytoplasmic. Residues 13–32 (RVRSVLLLFITISLLFYYTF) traverse the membrane as a helical; Signal-anchor for type II membrane protein segment. At 33–849 (QNEIDILNSY…TQGGHIIKKK (817 aa)) the chain is on the lumenal side. An N-linked (GlcNAc...) asparagine glycan is attached at Asn-45. The tract at residues 56 to 79 (HNTEGSSKLDPPDLSSTGSDRIAT) is disordered. Cys-559 and Cys-598 are disulfide-bonded.

This sequence belongs to the glycosyl hydrolase 47 family. Ca(2+) is required as a cofactor.

It localises to the endoplasmic reticulum membrane. It participates in protein modification; protein glycosylation. Putative mannosidase involved in glycoprotein quality control since it is involved in the targeting of misfolded glycoproteins for ER-associated protein degradation (ERAD). The polypeptide is Putative endoplasmic reticulum mannosidase MNL2 (MNL2) (Saccharomyces cerevisiae (strain ATCC 204508 / S288c) (Baker's yeast)).